Here is a 23-residue protein sequence, read N- to C-terminus: Caerin-4.3 (23 aa).

Expressed by the skin parotoid and/or rostral glands.

It localises to the secreted. In terms of biological role, antibacterial peptide, that adopts an alpha helical conformation which can disrupt bacterial membranes. Each caerin displays a different antimicrobial specificity. The sequence is that of Caerin-4.3 from Ranoidea caerulea (Green tree frog).